Here is a 160-residue protein sequence, read N- to C-terminus: G-protein-signaling modulator 3 (160 aa).

The interval 1–55 (MEAERPQEEEDGEQGPPQDEEGWPPPNSTTRPWRSAPPSPPPPGTRHTALGPRSA) is disordered. Residues 7–22 (QEEEDGEQGPPQDEEG) are compositionally biased toward acidic residues. A phosphoserine mark is found at Ser35, Ser39, Ser56, and Ser59. Positions 35 to 44 (SAPPSPPPPG) are enriched in pro residues. At Thr62 the chain carries Phosphothreonine. GoLoco domains follow at residues 62–84 (TELLLDLVAEAQSRRLEEQRATF), 104–126 (REQLYSTILSHQCQRMEAQRSEP), and 132–155 (GQELLELLLRVQGGGRMEEQRSRP).

As to expression, expressed in heart, placenta, lung and liver.

Its subcellular location is the cytoplasm. Interacts with subunit of G(i) alpha proteins and regulates the activation of G(i) alpha proteins. The chain is G-protein-signaling modulator 3 (GPSM3) from Homo sapiens (Human).